The chain runs to 313 residues: ADP-L-glycero-D-manno-heptose-6-epimerase (313 aa).

Residues 10–11, 31–32, lysine 38, lysine 53, 75–79, and asparagine 92 each bind NADP(+); these read MI, DN, and EGACS. Tyrosine 139 acts as the Proton acceptor in catalysis. NADP(+) is bound at residue lysine 143. Asparagine 174 provides a ligand contact to substrate. Residues valine 175 and lysine 183 each contribute to the NADP(+) site. Lysine 183 serves as the catalytic Proton acceptor. Substrate contacts are provided by residues serine 185, histidine 192, 206-209, arginine 214, and tyrosine 277; that span reads FEGS.

Belongs to the NAD(P)-dependent epimerase/dehydratase family. HldD subfamily. Homopentamer. It depends on NADP(+) as a cofactor.

The enzyme catalyses ADP-D-glycero-beta-D-manno-heptose = ADP-L-glycero-beta-D-manno-heptose. It participates in nucleotide-sugar biosynthesis; ADP-L-glycero-beta-D-manno-heptose biosynthesis; ADP-L-glycero-beta-D-manno-heptose from D-glycero-beta-D-manno-heptose 7-phosphate: step 4/4. Functionally, catalyzes the interconversion between ADP-D-glycero-beta-D-manno-heptose and ADP-L-glycero-beta-D-manno-heptose via an epimerization at carbon 6 of the heptose. The sequence is that of ADP-L-glycero-D-manno-heptose-6-epimerase from Aliivibrio fischeri (strain MJ11) (Vibrio fischeri).